Reading from the N-terminus, the 894-residue chain is Kinesin-like protein KIN-UB (894 aa).

Positions 1-53 are disordered; that stretch reads MAMASSRNGAVRGSMRPVSGANSSNLRSSSFKSRIPSSAPAPRRSSSASIGAA. Positions 19-50 are enriched in low complexity; the sequence is SGANSSNLRSSSFKSRIPSSAPAPRRSSSASI. The 343-residue stretch at 60–402 folds into the Kinesin motor domain; the sequence is RVRVAVRLRP…ILFGQRAMKV (343 aa). Residue 145-152 coordinates ATP; that stretch reads GQTGTGKT. The D-BOX signature appears at 372–380; sequence RTSLIVTIG. Residues 423–588 are a coiled coil; sequence VQLDKVIAEN…RSQLVQLTFE (166 aa). 2 disordered regions span residues 530 to 550 and 598 to 623; these read EEEV…GEGE and RGAP…ESVN. Residues 603–623 are compositionally biased toward polar residues; the sequence is NSYSGTDSLPSRHSQARESVN. ARM repeat units follow at residues 626-665, 667-707, 709-749, and 751-790; these read KAPF…NLAA, EANQ…NLAM, EVSQ…NLCG, and DKLQ…NFAK.

The protein belongs to the TRAFAC class myosin-kinesin ATPase superfamily. Kinesin family. Ungrouped subfamily. Interacts (via C-terminus) with NEK5. Expressed in the basal regions and petioles of immature leaves and in the root elongation zone.

The protein localises to the cytoplasm. It localises to the cytoskeleton. Involved in the control of epidermal-cell morphogenesis in roots and helical growth of roots by promoting microtubule depolymerization and limiting the accumulation of endoplasmic microtubules. Seems to be involved in the control of cell-file rotation (or twisting). This is Kinesin-like protein KIN-UB from Arabidopsis thaliana (Mouse-ear cress).